The following is a 445-amino-acid chain: MGGVGEPGPREGPAQPGAPLPTFCWEQIRAHDQPGDKWLVIERRVYDISRWAQRHPGGSRLIGHHGAEDATDAFRAFHQDLNFVRKFLQPLLIGELAPEEPSQDGPLNAQLVEDFRALHQAAEDMKLFDASPTFFAFLLGHILAMEVLAWLLIYLLGPGWVPSALAAFILAISQAQSWCLQHDLGHASIFKKSWWNHVAQKFVMGQLKGFSAHWWNFRHFQHHAKPNIFHKDPDVTVAPVFLLGESSVEYGKKKRRYLPYNQQHLYFFLIGPPLLTLVNFEVENLAYMLVCMQWADLLWAASFYARFFLSYLPFYGVPGVLLFFVAVRVLESHWFVWITQMNHIPKEIGHEKHRDWVSSQLAATCNVEPSLFTNWFSGHLNFQIEHHLFPRMPRHNYSRVAPLVKSLCAKHGLSYEVKPFLTALVDIVRSLKKSGDIWLDAYLHQ.

The disordered stretch occupies residues 1-21 (MGGVGEPGPREGPAQPGAPLP). Over 1-133 (MGGVGEPGPR…DMKLFDASPT (133 aa)) the chain is Cytoplasmic. Residues 20–97 (LPTFCWEQIR…LQPLLIGELA (78 aa)) form the Cytochrome b5 heme-binding domain. The chain crosses the membrane as a helical span at residues 134–154 (FFAFLLGHILAMEVLAWLLIY). At 155 to 159 (LLGPG) the chain is on the lumenal side. Residues 160-180 (WVPSALAAFILAISQAQSWCL) form a helical membrane-spanning segment. Residues 181–263 (QHDLGHASIF…KRRYLPYNQQ (83 aa)) lie on the Cytoplasmic side of the membrane. The Histidine box-1 signature appears at 182–186 (HDLGH). The Histidine box-2 motif lies at 219–223 (HFQHH). Residues 264–284 (HLYFFLIGPPLLTLVNFEVEN) form a helical membrane-spanning segment. Residues 285-306 (LAYMLVCMQWADLLWAASFYAR) lie on the Lumenal side of the membrane. A helical membrane pass occupies residues 307-327 (FFLSYLPFYGVPGVLLFFVAV). Over 328–445 (RVLESHWFVW…DIWLDAYLHQ (118 aa)) the chain is Cytoplasmic. A Histidine box-3 motif is present at residues 383–387 (QIEHH).

Belongs to the fatty acid desaturase type 1 family. Highly expressed in various organs and tissues including liver, kidney, brain, lung, pancreas, testis, ovary and skeletal muscle (at protein level).

It is found in the endoplasmic reticulum membrane. It carries out the reaction an N-acylsphing-4-enine + 2 Fe(II)-[cytochrome b5] + O2 + 2 H(+) = an N-acyl-sphinga-4E,14Z-dienine + 2 Fe(III)-[cytochrome b5] + 2 H2O. The enzyme catalyses N-(hexanoyl)sphing-4-enine + 2 Fe(II)-[cytochrome b5] + O2 + 2 H(+) = N-hexanoyl-sphinga-4E,14Z-dienine + 2 Fe(III)-[cytochrome b5] + 2 H2O. The catalysed reaction is sphing-4-enine + 2 Fe(II)-[cytochrome b5] + O2 + 2 H(+) = sphinga-4E,14Z-dienine + 2 Fe(III)-[cytochrome b5] + 2 H2O. It catalyses the reaction (11E)-octadecenoyl-CoA + 2 Fe(II)-[cytochrome b5] + O2 + 2 H(+) = (11E,13Z)-octadecadienoyl-CoA + 2 Fe(III)-[cytochrome b5] + 2 H2O. It carries out the reaction N-acyl-1-deoxysphinganine + 2 Fe(II)-[cytochrome b5] + O2 + 2 H(+) = N-acyl-1-deoxysphing-14Z-enine + 2 Fe(III)-[cytochrome b5] + 2 H2O. The enzyme catalyses an N-acylsphinganine + 2 Fe(II)-[cytochrome b5] + O2 + 2 H(+) = an N-acylsphing-14Z-enine + 2 Fe(III)-[cytochrome b5] + 2 H2O. Its pathway is lipid metabolism; sphingolipid metabolism. It functions in the pathway lipid metabolism; polyunsaturated fatty acid biosynthesis. Its function is as follows. Mammals have different sphingoid bases that differ in their length and/or pattern of desaturation and hydroxyl groups. The predominant sphingoid base that comprises mammalian ceramides is sphing-4-enine (sphingosine or SPH) which has a trans (E) desaturation at carbon 4. FADS3 is a desaturase that introduces a cis (Z) double bond between carbon 14 and carbon 15 of the sphingoid base (also known as long chain base, LCB), producing LCBs such as sphinga-4,14-dienine (SPD, d18:2(4E,14Z)) from SPH. Prefers SPH-containing ceramides (N-acylsphing-4-enines) as substrates. Capable of metabolizing also the SPH in its free form. SPD ceramides occur widely in mammalian tissues and cells. Due to their unusual structure containing a cis double bond, SPD ceramides may have an opposite, negative role in lipid microdomain formation relative to conventional ceramides. Could be involved in the detoxification of 1-deoxy sphingolipids, by desaturating the cytotoxic 1-deoxysphinganine (1-deoxySA, m18:0), produced under pathological conditions, to 1-deoxysphingenine (1-deoxysphingosine, 1-deoxySO, m18:1). Although prefers SPH-containing ceramides (N-acylsphing-4-enines) as substrates, it also exhibits activity toward dihydrosphingosine-containing CERs (N-acylsphinganines) and produces 14Z-SPH-containing sphingolipids,which can be found in patients with DEGS1 mutations. Its desaturase mechanism involves an electron transfer facilitated by cytochrome b5. FADS3 also acts as a methyl-end fatty acyl coenzyme A (CoA) desaturase that introduces a cis double bond between the preexisting double bond and the terminal methyl group of the fatty acyl chain. Desaturates (11E)-octadecenoate (trans-vaccenoate, the predominant trans fatty acid in human milk) at carbon 13 to generate (11E,13Z)-octadecadienoate (also known as conjugated linoleic acid 11E,13Z-CLA). The protein is Fatty acid desaturase 3 of Homo sapiens (Human).